Consider the following 415-residue polypeptide: Homoserine O-succinyltransferase (415 aa).

Residues 69–383 (NAVLVCHALN…PHGHDAFLLD (315 aa)) form the AB hydrolase-1 domain. The active-site Nucleophile is the serine 175. Arginine 245 is a substrate binding site. Catalysis depends on residues aspartate 344 and histidine 377. Substrate is bound at residue aspartate 378.

It belongs to the AB hydrolase superfamily. MetX family. Homodimer.

It localises to the cytoplasm. The enzyme catalyses L-homoserine + succinyl-CoA = O-succinyl-L-homoserine + CoA. The protein operates within amino-acid biosynthesis; L-methionine biosynthesis via de novo pathway; O-succinyl-L-homoserine from L-homoserine: step 1/1. In terms of biological role, transfers a succinyl group from succinyl-CoA to L-homoserine, forming succinyl-L-homoserine. This chain is Homoserine O-succinyltransferase, found in Bordetella parapertussis (strain 12822 / ATCC BAA-587 / NCTC 13253).